The following is a 311-amino-acid chain: Olfactory receptor 5AN1 (311 aa).

Residues 1–26 (MTGGGNITEITYFILLGFSDFPRIIK) are Extracellular-facing. N6 carries N-linked (GlcNAc...) asparagine glycosylation. A helical transmembrane segment spans residues 27–47 (VLFTIFLVIYITSLAWNLSLI). Over 48–55 (VLIRMDSH) the chain is Cytoplasmic. The helical transmembrane segment at 56–76 (LHTPMYFFLSNLSFIDVCYIS) threads the bilayer. The Extracellular segment spans residues 77–100 (STVPKMLSNLLQEQQTITFVGCII). Residues C98 and C190 are joined by a disulfide bond. Residues 101 to 121 (QYFIFSTMGLSESCLMTAMAY) traverse the membrane as a helical segment. The Cytoplasmic segment spans residues 122-134 (DRYAAICNPLLYS). Residues 135 to 155 (SIMSPTLCVWMVLGAYMTGLT) traverse the membrane as a helical segment. Residues 156–197 (ASLFQIGALLQLHFCGSNVIRHFFCDMPQLLILSCTDTFFVQ) are Extracellular-facing. Residues 198–218 (VMTAILTMFFGIASALVIMIS) form a helical membrane-spanning segment. At 219 to 238 (YGYIGISIMKITSAKGRSKA) the chain is on the cytoplasmic side. The helical transmembrane segment at 239–259 (FNTCASHLTAVSLFYTSGIFV) threads the bilayer. Residues 260–272 (YLSSSSGGSSSFD) lie on the Extracellular side of the membrane. Residues 273–293 (RFASVFYTVVIPMLNPLIYSL) traverse the membrane as a helical segment. Over 294-311 (RNKEIKDALKRLQKRKCC) the chain is Cytoplasmic.

This sequence belongs to the G-protein coupled receptor 1 family.

It is found in the cell membrane. In terms of biological role, odorant receptor for musk, which specifically recognizes muscone, musk xylol, and musk ketone. Ligand-binding causes a conformation change that triggers signaling via G(s)-class of G alpha protein GNAL, activating adenylyl cyclase. In Homo sapiens (Human), this protein is Olfactory receptor 5AN1.